The chain runs to 361 residues: Caffeic acid 3-O-methyltransferase 1 (361 aa).

128–134 lines the substrate pocket; the sequence is MNQDKVL. Residues 160-178 are substrate binding; that stretch reads AFEYHGTDPRFNKVFNQGM. Gly-206, Asp-229, Asp-249, Met-250, and Lys-263 together coordinate S-adenosyl-L-methionine. His-267 functions as the Proton acceptor in the catalytic mechanism.

The protein belongs to the class I-like SAM-binding methyltransferase superfamily. Cation-independent O-methyltransferase family. COMT subfamily. As to quaternary structure, homodimer.

The catalysed reaction is (E)-caffeate + S-adenosyl-L-methionine = (E)-ferulate + S-adenosyl-L-homocysteine + H(+). Its pathway is aromatic compound metabolism; phenylpropanoid biosynthesis. In terms of biological role, catalyzes the conversion of caffeic acid to ferulic acid and of 5-hydroxyferulic acid to sinapic acid. The resulting products may subsequently be converted to the corresponding alcohols that are incorporated into lignins. The polypeptide is Caffeic acid 3-O-methyltransferase 1 (COMT1) (Ocimum basilicum (Sweet basil)).